Consider the following 61-residue polypeptide: Phospholipase A2 (61 aa).

Ca(2+) is bound by residues Tyr27, Gly29, and Gly31. Cys28 and Cys35 are oxidised to a cystine. His38 is a catalytic residue. Asp39 is a binding site for Ca(2+). Cysteines 41 and 59 form a disulfide. The active site involves Asp60.

It belongs to the phospholipase A2 family. Group II subfamily. D49 sub-subfamily. Homodimer. Ca(2+) is required as a cofactor. In terms of tissue distribution, expressed by the venom gland.

The protein localises to the secreted. The catalysed reaction is a 1,2-diacyl-sn-glycero-3-phosphocholine + H2O = a 1-acyl-sn-glycero-3-phosphocholine + a fatty acid + H(+). Snake venom phospholipase A2 (PLA2) that displays edema-inducing activities. PLA2 catalyzes the calcium-dependent hydrolysis of the 2-acyl groups in 3-sn-phosphoglycerides. The protein is Phospholipase A2 of Crotalus atrox (Western diamondback rattlesnake).